A 1305-amino-acid polypeptide reads, in one-letter code: Cyclin-G-associated kinase (1305 aa).

Residue S2 is modified to N-acetylserine. 2 positions are modified to phosphoserine: S2 and S16. The 276-residue stretch at 40-315 folds into the Protein kinase domain; sequence LRVRRVLAEG…IAEVVRQLQE (276 aa). The active-site Proton acceptor is D173. Residues 332-354 are disordered; that stretch reads LEQNGGYGNSGPSRAQPPSGGPV. In terms of domain architecture, Phosphatase tensin-type spans 397-564; it reads SVANYAKGDL…EYVCDMVAEE (168 aa). At S454 the chain carries Phosphoserine. In terms of domain architecture, C2 tensin-type spans 570–708; it reads SKPMLVKSVV…FQVNLEVEVE (139 aa). Residues 747–856 form a disordered region; sequence FGKPELPRQP…TPRLAAGTRQ (110 aa). Position 768 is a phosphoserine (S768). Phosphothreonine is present on T774. The span at 776–789 shows a compositional bias: polar residues; sequence SDSPQSSSTDTNHF. S781 carries the post-translational modification Phosphoserine. The residue at position 792 (T792) is a Phosphothreonine. Residues 805 to 817 are compositionally biased toward polar residues; that stretch reads VDNTSPKESQSNL. Phosphoserine is present on residues S809, S824, and S827. Positions 822–832 are enriched in acidic residues; the sequence is DGSEVSDEEEA. Over residues 836–848 the composition is skewed to basic and acidic residues; the sequence is SEERKPGAGEDTP. A Phosphoserine modification is found at S938. The segment at 1044-1141 is disordered; that stretch reads LPGPASMPVP…PQAKPAPRAS (98 aa). The segment covering 1105–1131 has biased composition (polar residues); it reads VGTSATTHKSNSSWQTTRPTAPGTSWP. R1122 carries the post-translational modification Omega-N-methylarginine. A Phosphoserine modification is found at S1171. A J domain is found at 1241–1305; it reads SRWTPVSMAD…FENQGSRPLF (65 aa).

The protein belongs to the protein kinase superfamily. Ser/Thr protein kinase family.

It is found in the cytoplasm. It localises to the perinuclear region. Its subcellular location is the golgi apparatus. The protein resides in the trans-Golgi network. The protein localises to the cell junction. It is found in the focal adhesion. It localises to the cytoplasmic vesicle. Its subcellular location is the clathrin-coated vesicle. It carries out the reaction L-seryl-[protein] + ATP = O-phospho-L-seryl-[protein] + ADP + H(+). The catalysed reaction is L-threonyl-[protein] + ATP = O-phospho-L-threonyl-[protein] + ADP + H(+). Its function is as follows. Associates with cyclin G and CDK5. Seems to act as an auxilin homolog that is involved in the uncoating of clathrin-coated vesicles by Hsc70 in non-neuronal cells. Expression oscillates slightly during the cell cycle, peaking at G1. May play a role in clathrin-mediated endocytosis and intracellular trafficking, and in the dynamics of clathrin assembly/disassembly. The polypeptide is Cyclin-G-associated kinase (Rattus norvegicus (Rat)).